Reading from the N-terminus, the 238-residue chain is tRNA (guanine-N(7)-)-methyltransferase (238 aa).

4 residues coordinate S-adenosyl-L-methionine: glutamate 68, glutamate 93, aspartate 120, and aspartate 143. The active site involves aspartate 143. Residues lysine 147, aspartate 179, and 216–219 (TKFE) each bind substrate.

It belongs to the class I-like SAM-binding methyltransferase superfamily. TrmB family.

It catalyses the reaction guanosine(46) in tRNA + S-adenosyl-L-methionine = N(7)-methylguanosine(46) in tRNA + S-adenosyl-L-homocysteine. Its pathway is tRNA modification; N(7)-methylguanine-tRNA biosynthesis. Catalyzes the formation of N(7)-methylguanine at position 46 (m7G46) in tRNA. In Shewanella frigidimarina (strain NCIMB 400), this protein is tRNA (guanine-N(7)-)-methyltransferase.